The primary structure comprises 313 residues: Holliday junction branch migration complex subunit RuvB (313 aa).

A large ATPase domain (RuvB-L) region spans residues 1 to 157; the sequence is MNEYIGQGNI…FGLIMELDFY (157 aa). Residues glycine 38, lysine 41, threonine 42, threonine 43, 104–106, arginine 147, tyrosine 157, and arginine 194 contribute to the ATP site; that span reads EDF. Threonine 42 lines the Mg(2+) pocket. The interval 158-228 is small ATPAse domain (RuvB-S); it reads SIDELSKIIE…MVEEIMFLLG (71 aa). The head domain (RuvB-H) stretch occupies residues 231–313; it reads KEGLDELDRK…KVQRGLFDEE (83 aa). The DNA site is built by arginine 286 and arginine 291.

It belongs to the RuvB family. In terms of assembly, homohexamer. Forms an RuvA(8)-RuvB(12)-Holliday junction (HJ) complex. HJ DNA is sandwiched between 2 RuvA tetramers; dsDNA enters through RuvA and exits via RuvB. An RuvB hexamer assembles on each DNA strand where it exits the tetramer. Each RuvB hexamer is contacted by two RuvA subunits (via domain III) on 2 adjacent RuvB subunits; this complex drives branch migration. In the full resolvosome a probable DNA-RuvA(4)-RuvB(12)-RuvC(2) complex forms which resolves the HJ.

It is found in the cytoplasm. The enzyme catalyses ATP + H2O = ADP + phosphate + H(+). Its function is as follows. The RuvA-RuvB-RuvC complex processes Holliday junction (HJ) DNA during genetic recombination and DNA repair, while the RuvA-RuvB complex plays an important role in the rescue of blocked DNA replication forks via replication fork reversal (RFR). RuvA specifically binds to HJ cruciform DNA, conferring on it an open structure. The RuvB hexamer acts as an ATP-dependent pump, pulling dsDNA into and through the RuvAB complex. RuvB forms 2 homohexamers on either side of HJ DNA bound by 1 or 2 RuvA tetramers; 4 subunits per hexamer contact DNA at a time. Coordinated motions by a converter formed by DNA-disengaged RuvB subunits stimulates ATP hydrolysis and nucleotide exchange. Immobilization of the converter enables RuvB to convert the ATP-contained energy into a lever motion, pulling 2 nucleotides of DNA out of the RuvA tetramer per ATP hydrolyzed, thus driving DNA branch migration. The RuvB motors rotate together with the DNA substrate, which together with the progressing nucleotide cycle form the mechanistic basis for DNA recombination by continuous HJ branch migration. Branch migration allows RuvC to scan DNA until it finds its consensus sequence, where it cleaves and resolves cruciform DNA. The polypeptide is Holliday junction branch migration complex subunit RuvB (Thermosipho melanesiensis (strain DSM 12029 / CIP 104789 / BI429)).